The following is a 280-amino-acid chain: Protease HtpX (280 aa).

2 helical membrane passes run 7 to 26 (TFIL…GLLG) and 30 to 49 (GMLV…YWYS). Residue His129 coordinates Zn(2+). The active site involves Glu130. His133 provides a ligand contact to Zn(2+). A run of 2 helical transmembrane segments spans residues 146–166 (ATIA…SMFG) and 178–198 (VVGM…QMAI). Zn(2+) is bound at residue Glu203.

It belongs to the peptidase M48B family. Zn(2+) is required as a cofactor.

The protein localises to the cell inner membrane. This chain is Protease HtpX, found in Legionella pneumophila (strain Lens).